A 338-amino-acid polypeptide reads, in one-letter code: Lipoate-protein ligase A (338 aa).

Positions 29–216 (PATQRVLFLW…AFFSHYGERV (188 aa)) constitute a BPL/LPL catalytic domain. ATP is bound by residues R71, 76-79 (GAVF), and K134. K134 contacts (R)-lipoate.

It belongs to the LplA family. In terms of assembly, monomer.

The protein localises to the cytoplasm. The catalysed reaction is L-lysyl-[lipoyl-carrier protein] + (R)-lipoate + ATP = N(6)-[(R)-lipoyl]-L-lysyl-[lipoyl-carrier protein] + AMP + diphosphate + H(+). Its pathway is protein modification; protein lipoylation via exogenous pathway; protein N(6)-(lipoyl)lysine from lipoate: step 1/2. It participates in protein modification; protein lipoylation via exogenous pathway; protein N(6)-(lipoyl)lysine from lipoate: step 2/2. Its function is as follows. Catalyzes both the ATP-dependent activation of exogenously supplied lipoate to lipoyl-AMP and the transfer of the activated lipoyl onto the lipoyl domains of lipoate-dependent enzymes. The sequence is that of Lipoate-protein ligase A from Klebsiella pneumoniae subsp. pneumoniae (strain ATCC 700721 / MGH 78578).